Consider the following 898-residue polypeptide: Serine/threonine-protein kinase TAO3 (898 aa).

The Protein kinase domain occupies phenylalanine 24–isoleucine 277. ATP is bound by residues isoleucine 30 to valine 38 and lysine 53. Residue aspartate 147 is the Proton acceptor of the active site. Disordered regions lie at residues threonine 316–aspartate 372 and aspartate 405–serine 424. 5 positions are modified to phosphoserine: serine 324, serine 331, serine 343, serine 346, and serine 349. The span at serine 349–serine 366 shows a compositional bias: low complexity. A Phosphothreonine modification is found at threonine 357. Residue serine 359 is modified to Phosphoserine. The span at aspartate 405–proline 416 shows a compositional bias: basic and acidic residues. Serine 442 carries the post-translational modification Phosphoserine. 3 coiled-coil regions span residues glutamate 452–asparagine 502, phenylalanine 548–leucine 649, and isoleucine 753–glutamate 871. Residues glutamate 565–glutamate 596 are disordered. Lysine 830 carries the N6-acetyllysine modification.

Belongs to the protein kinase superfamily. STE Ser/Thr protein kinase family. STE20 subfamily. In terms of assembly, self-associates. Interacts with ERN1 and TRAF2. Interaction with TRAF2 is facilitated under ER stress conditions, such as treatment with tunicamycin, and may promote TRAF2 phosphorylation. Interacts (via N-terminus) with STK25; the interaction promotes STK25 abundance at the level of protein expression and/or stability. Autophosphorylated. Phosphorylation at Ser-324 by ATM following DNA damage is required for activation of the p38/MAPK14 stress-activated MAPK cascade. Phosphorylated at Ser-324 and on Tyr residues during T cell activation. Phosphorylated by LRRK2. As to expression, ubiquitously expressed, with a higher expression in the retina.

The protein resides in the cytoplasm. Its subcellular location is the cell membrane. It is found in the membrane raft. The protein localises to the lipid droplet. The enzyme catalyses L-seryl-[protein] + ATP = O-phospho-L-seryl-[protein] + ADP + H(+). The catalysed reaction is L-threonyl-[protein] + ATP = O-phospho-L-threonyl-[protein] + ADP + H(+). In terms of biological role, serine/threonine-protein kinase that acts as a regulator of the p38/MAPK14 stress-activated MAPK cascade and of the MAPK8/JNK cascade. In response to DNA damage, involved in the G2/M transition DNA damage checkpoint by activating the p38/MAPK14 stress-activated MAPK cascade, probably by mediating phosphorylation of upstream MAP2K3 and MAP2K6 kinases. Inhibits basal activity of the MAPK8/JNK cascade and diminishes its activation in response to epidermal growth factor (EGF). Positively regulates canonical T cell receptor (TCR) signaling by preventing early PTPN6/SHP1-mediated inactivation of LCK, ensuring sustained TCR signaling that is required for optimal activation and differentiation of T cells. Phosphorylates PTPN6/SHP1 on 'Thr-396', leading to its polyubiquitination and subsequent proteasomal degradation. Required for cell surface expression of metalloprotease ADAM10 on type 1 transitional B cells which is necessary for their NOTCH-mediated development into marginal zone B cells. Also required for the NOTCH-mediated terminal differentiation of splenic conventional type 2 dendritic cells. Positively regulates osteoblast differentiation by acting as an upstream activator of the JNK pathway. Promotes JNK signaling in hepatocytes and positively regulates hepatocyte lipid storage by inhibiting beta-oxidation and triacylglycerol secretion while enhancing lipid synthesis. Restricts age-associated inflammation by negatively regulating differentiation of macrophages and their production of pro-inflammatory cytokines. Plays a role in negatively regulating the abundance of regulatory T cells in white adipose tissue. This chain is Serine/threonine-protein kinase TAO3 (Taok3), found in Rattus norvegicus (Rat).